The following is a 156-amino-acid chain: Small ribosomal subunit protein uS7 (156 aa).

This sequence belongs to the universal ribosomal protein uS7 family. Part of the 30S ribosomal subunit. Contacts proteins S9 and S11.

One of the primary rRNA binding proteins, it binds directly to 16S rRNA where it nucleates assembly of the head domain of the 30S subunit. Is located at the subunit interface close to the decoding center, probably blocks exit of the E-site tRNA. The sequence is that of Small ribosomal subunit protein uS7 from Mycobacterium tuberculosis (strain CDC 1551 / Oshkosh).